The chain runs to 432 residues: Delta-aminolevulinic acid dehydratase, chloroplastic (432 aa).

Positions Ala84–Asn113 are disordered. Catalysis depends on Lys300, which acts as the Schiff-base intermediate with substrate. 5-aminolevulinate is bound by residues Arg310 and Lys322. Glu338 is a binding site for Mg(2+). The active-site Schiff-base intermediate with substrate is Lys353. Residues Ser379 and Tyr418 each contribute to the 5-aminolevulinate site.

This sequence belongs to the ALAD family. In terms of assembly, homooctamer. Mg(2+) is required as a cofactor.

The protein localises to the plastid. The protein resides in the chloroplast. The catalysed reaction is 2 5-aminolevulinate = porphobilinogen + 2 H2O + H(+). It functions in the pathway porphyrin-containing compound metabolism; protoporphyrin-IX biosynthesis; coproporphyrinogen-III from 5-aminolevulinate: step 1/4. Functionally, catalyzes an early step in the biosynthesis of tetrapyrroles. Binds two molecules of 5-aminolevulinate per subunit, each at a distinct site, and catalyzes their condensation to form porphobilinogen. The protein is Delta-aminolevulinic acid dehydratase, chloroplastic (HEMB) of Physcomitrium patens (Spreading-leaved earth moss).